The chain runs to 232 residues: Ribosomal RNA small subunit methyltransferase G (232 aa).

Residues Gly93, Leu98, 144–145 (VE), and Arg163 each bind S-adenosyl-L-methionine.

The protein belongs to the methyltransferase superfamily. RNA methyltransferase RsmG family.

It is found in the cytoplasm. It carries out the reaction guanosine(527) in 16S rRNA + S-adenosyl-L-methionine = N(7)-methylguanosine(527) in 16S rRNA + S-adenosyl-L-homocysteine. Specifically methylates the N7 position of guanine in position 527 of 16S rRNA. The chain is Ribosomal RNA small subunit methyltransferase G from Burkholderia pseudomallei (strain 1106a).